A 147-amino-acid chain; its full sequence is Shadow of prion protein (147 aa).

A signal peptide spans M1–A24. Residues G26–R43 are compositionally biased toward gly residues. The disordered stretch occupies residues G26–S46. An N-linked (GlcNAc...) asparagine glycan is attached at N107. A lipid anchor (GPI-anchor amidated glycine) is attached at G122. Positions S123–P147 are cleaved as a propeptide — removed in mature form.

The protein belongs to the SPRN family. Post-translationally, N-glycosylated. In terms of tissue distribution, almost exclusively expressed in brain, with weak expression in lung and stomach.

It is found in the cell membrane. Its function is as follows. Prion-like protein that has PrP(C)-like neuroprotective activity. May act as a modulator for the biological actions of normal and abnormal PrP. The sequence is that of Shadow of prion protein (Sprn) from Rattus norvegicus (Rat).